The sequence spans 752 residues: Cytosolic phospholipase A2 (752 aa).

Residues 1-178 form a phospholipid binding region; that stretch reads MSFIDPYQHI…MKKLLGPKKS (178 aa). Position 2 is a phosphoserine (S2). The C2 domain occupies 6–122; sequence PYQHIIVEHQ…KVGEKKEVPF (117 aa). D40, T41, D43, N65, D93, A94, and N95 together coordinate Ca(2+). A PLA2c domain is found at 140–740; it reads SCPDLRFSMA…SNVEARKFFN (601 aa). The active-site Nucleophile is the S228. A Phosphothreonine modification is found at T268. Residues 427-457 form a disordered region; sequence KHIVSNDSSDSDDEAQGPKGTENEDAEREYQ. Residues S434, S435, and S437 each carry the phosphoserine modification. Phosphoserine; by MAPK is present on S505. Residues S511 and S515 each carry the phosphoserine modification. K541 participates in a covalent cross-link: Glycyl lysine isopeptide (Lys-Gly) (interchain with G-Cter in SUMO2). D549 functions as the Proton acceptor in the catalytic mechanism. Residue K606 forms a Glycyl lysine isopeptide (Lys-Gly) (interchain with G-Cter in SUMO2) linkage. Residues S727 and S729 each carry the phosphoserine modification.

Interacts with KAT5. Phosphorylated at both Ser-505 and Ser-727 in response to mitogenic stimuli. In brain tissue, expressed in low levels in olfactory mitral and granule cells, in hippocampal pyramidal cells and in dentate and cerebellar granule cells.

The protein localises to the cytoplasm. The protein resides in the golgi apparatus membrane. It is found in the nucleus envelope. The catalysed reaction is a 1,2-diacyl-sn-glycero-3-phosphocholine + H2O = a 1-acyl-sn-glycero-3-phosphocholine + a fatty acid + H(+). It catalyses the reaction a 1-O-alkyl-2-acyl-sn-glycero-3-phosphocholine + H2O = a 1-O-alkyl-sn-glycero-3-phosphocholine + a fatty acid + H(+). The enzyme catalyses a 1-acyl-sn-glycero-3-phosphocholine + H2O = sn-glycerol 3-phosphocholine + a fatty acid + H(+). It carries out the reaction 1-hexadecanoyl-2-(5Z,8Z,11Z,14Z-eicosatetraenoyl)-sn-glycero-3-phosphocholine + H2O = 1-hexadecanoyl-sn-glycero-3-phosphocholine + (5Z,8Z,11Z,14Z)-eicosatetraenoate + H(+). The catalysed reaction is 1,2-di-(5Z,8Z,11Z,14Z-eicosatetraenoyl)-sn-glycero-3-phosphocholine + H2O = 1-(5Z,8Z,11Z,14Z-eicosatetraenoyl)-sn-glycero-3-phosphocholine + (5Z,8Z,11Z,14Z)-eicosatetraenoate + H(+). It catalyses the reaction 1-octadecanoyl-2-(5Z,8Z,11Z,14Z-eicosatetraenoyl)-sn-glycero-3-phosphocholine + H2O = 1-octadecanoyl-sn-glycero-3-phosphocholine + (5Z,8Z,11Z,14Z)-eicosatetraenoate + H(+). The enzyme catalyses 1-hexadecanoyl-2-(9Z,12Z-octadecadienoyl)-sn-glycero-3-phosphocholine + H2O = (9Z,12Z)-octadecadienoate + 1-hexadecanoyl-sn-glycero-3-phosphocholine + H(+). It carries out the reaction 1-octadecanoyl-2-(9Z,12Z,15Z-octadecatrienoyl)-sn-glycero-3-phosphocholine + H2O = (9Z,12Z,15Z)-octadecatrienoate + 1-octadecanoyl-sn-glycero-3-phosphocholine + H(+). The catalysed reaction is 1-(5Z,8Z,11Z,14Z-eicosatetraenoyl)-2-hexadecanoyl-sn-glycero-3-phosphocholine + H2O = 1-(5Z,8Z,11Z,14Z-eicosatetraenoyl)-sn-glycero-3-phosphocholine + hexadecanoate + H(+). It catalyses the reaction 1-O-hexadecyl-2-(5Z,8Z,11Z,14Z)-eicosatetraenoyl-sn-glycero-3-phosphocholine + H2O = 1-O-hexadecyl-sn-glycero-3-phosphocholine + (5Z,8Z,11Z,14Z)-eicosatetraenoate + H(+). The enzyme catalyses 1,2-di-(9Z-octadecenoyl)-sn-glycero-3-phospho-(1'-sn-glycerol) + H2O = 1-(9Z-octadecenoyl)-sn-glycero-3-phospho-(1'-sn-glycerol) + (9Z)-octadecenoate + H(+). It carries out the reaction 1-octadecanoyl-2-(5Z,8Z,11Z,14Z-eicosatetraenoyl)-sn-glycero-3-phosphate + H2O = 1-octadecanoyl-sn-glycero-3-phosphate + (5Z,8Z,11Z,14Z)-eicosatetraenoate + H(+). The catalysed reaction is 1-hexadecanoyl-sn-glycero-3-phosphocholine + H2O = sn-glycerol 3-phosphocholine + hexadecanoate + H(+). It catalyses the reaction 2-(prostaglandin E2)-sn-glycero-3-phosphoethanolamine + H2O = sn-glycero-3-phosphoethanolamine + prostaglandin E2 + H(+). The enzyme catalyses 2-[(15S)-hydroxy-(5Z,8Z,11Z,13E)-eicosatetraenoyl]-sn-glycero-3-phosphocholine + H2O = (15S)-hydroxy-(5Z,8Z,11Z,13E)-eicosatetraenoate + sn-glycerol 3-phosphocholine + H(+). It carries out the reaction 2-[(15R)-hydroxy-(5Z,8Z,11Z,13E)-eicosatetraenoyl]-sn-glycero-3-phosphocholine + H2O = (15R)-hydroxy-(5Z,8Z,11Z,13E)-eicosatetraenoate + sn-glycerol 3-phosphocholine + H(+). The catalysed reaction is 2-(prostaglandin E2)-sn-glycero-3-phosphocholine + H2O = prostaglandin E2 + sn-glycerol 3-phosphocholine + H(+). It catalyses the reaction 2-[(11R)-hydroxy-(5Z,8Z,12E,14Z)-eicosatetraenoyl]-sn-glycero-3-phosphocholine + H2O = (11R)-hydroxy-(5Z,8Z,12E,14Z)-eicosatetraenoate + sn-glycerol 3-phosphocholine + H(+). The enzyme catalyses 1-(5Z,8Z,11Z,14Z-eicosatetraenoyl)-2-O-hexadecyl-sn-glycero-3-phosphocholine + H2O = 2-O-hexadecyl-sn-glycero-3-phosphocholine + (5Z,8Z,11Z,14Z)-eicosatetraenoate + H(+). It carries out the reaction 1-octadecanoyl-2-(5Z,8Z,11Z,14Z-eicosatetraenoyl)-sn-glycero-3-phosphocholine + glycerol = 1-(5Z,8Z,11Z,14Z-eicosatetraenoyl)-glycerol + 1-octadecanoyl-sn-glycero-3-phosphocholine. The catalysed reaction is 1-octadecanoyl-2-(9Z,12Z,15Z-octadecatrienoyl)-sn-glycero-3-phosphocholine + glycerol = 1-(9Z,12Z,15Z-octadecatrienoyl)-glycerol + 1-octadecanoyl-sn-glycero-3-phosphocholine. Its pathway is lipid metabolism; arachidonate metabolism. It functions in the pathway membrane lipid metabolism; glycerophospholipid metabolism. It participates in lipid metabolism; prostaglandin biosynthesis. The protein operates within lipid metabolism; leukotriene B4 biosynthesis. Activated by cytosolic calcium, which is necessary for binding to membrane lipids. Activated by phosphorylation in response to mitogenic stimuli. Its function is as follows. Has primarily calcium-dependent phospholipase and lysophospholipase activities, with a major role in membrane lipid remodeling and biosynthesis of lipid mediators of the inflammatory response. Plays an important role in embryo implantation and parturition through its ability to trigger prostanoid production. Preferentially hydrolyzes the ester bond of the fatty acyl group attached at sn-2 position of phospholipids (phospholipase A2 activity). Selectively hydrolyzes sn-2 arachidonoyl group from membrane phospholipids, providing the precursor for eicosanoid biosynthesis via the cyclooxygenase pathway. In an alternative pathway of eicosanoid biosynthesis, hydrolyzes sn-2 fatty acyl chain of eicosanoid lysophopholipids to release free bioactive eicosanoids. Hydrolyzes the ester bond of the fatty acyl group attached at sn-1 position of phospholipids (phospholipase A1 activity) only if an ether linkage rather than an ester linkage is present at the sn-2 position. This hydrolysis is not stereospecific. Has calcium-independent phospholipase A2 and lysophospholipase activities in the presence of phosphoinositides. Has O-acyltransferase activity. Catalyzes the transfer of fatty acyl chains from phospholipids to a primary hydroxyl group of glycerol (sn-1 or sn-3), potentially contributing to monoacylglycerol synthesis. The polypeptide is Cytosolic phospholipase A2 (Pla2g4a) (Rattus norvegicus (Rat)).